Consider the following 214-residue polypeptide: Orotate phosphoribosyltransferase (214 aa).

Lys-26 lines the 5-phospho-alpha-D-ribose 1-diphosphate pocket. An orotate-binding site is contributed by 34 to 35 (FF). Residues 72 to 73 (YK), Arg-99, Lys-100, Lys-103, His-105, and 124 to 132 (DDVITAGTA) contribute to the 5-phospho-alpha-D-ribose 1-diphosphate site. Orotate is bound by residues Thr-128 and Arg-157.

This sequence belongs to the purine/pyrimidine phosphoribosyltransferase family. PyrE subfamily. As to quaternary structure, homodimer. Mg(2+) serves as cofactor.

The enzyme catalyses orotidine 5'-phosphate + diphosphate = orotate + 5-phospho-alpha-D-ribose 1-diphosphate. The protein operates within pyrimidine metabolism; UMP biosynthesis via de novo pathway; UMP from orotate: step 1/2. Functionally, catalyzes the transfer of a ribosyl phosphate group from 5-phosphoribose 1-diphosphate to orotate, leading to the formation of orotidine monophosphate (OMP). This is Orotate phosphoribosyltransferase from Pseudomonas fluorescens (strain Pf0-1).